The sequence spans 451 residues: Phosphoglucosamine mutase (451 aa).

Serine 102 (phosphoserine intermediate) is an active-site residue. Serine 102, aspartate 242, aspartate 244, and aspartate 246 together coordinate Mg(2+). Serine 102 is modified (phosphoserine).

The protein belongs to the phosphohexose mutase family. It depends on Mg(2+) as a cofactor. In terms of processing, activated by phosphorylation.

It carries out the reaction alpha-D-glucosamine 1-phosphate = D-glucosamine 6-phosphate. Functionally, catalyzes the conversion of glucosamine-6-phosphate to glucosamine-1-phosphate. This chain is Phosphoglucosamine mutase, found in Staphylococcus carnosus (strain TM300).